The following is a 60-amino-acid chain: Insect toxin mu-NPTX-Nc1a (60 aa).

A signal peptide spans 1–19; sequence MIYQVVLLLLVSPAPVSAA.

Post-translationally, contains 4 disulfide bonds. As to expression, expressed by the venom gland.

It localises to the secreted. Insect-specific toxin. Blocks voltage-gated potassium and sodium channels. The polypeptide is Insect toxin mu-NPTX-Nc1a (Trichonephila clavata (Joro spider)).